The chain runs to 232 residues: DNA repair and recombination protein RadB (232 aa).

Belongs to the eukaryotic RecA-like protein family. RadB subfamily.

In terms of biological role, involved in DNA repair and in homologous recombination. May regulate the cleavage reactions of the branch-structured DNA. Has a very weak ATPase activity that is not stimulated by DNA. Binds DNA but does not promote DNA strands exchange. This Methanosphaera stadtmanae (strain ATCC 43021 / DSM 3091 / JCM 11832 / MCB-3) protein is DNA repair and recombination protein RadB.